A 950-amino-acid polypeptide reads, in one-letter code: Sodium/calcium exchanger Calx (950 aa).

The first 22 residues, 1 to 22 (MQLLLKSIFTCALFVIFVYATA), serve as a signal peptide directing secretion. At 23 to 120 (QSLLKVQETE…PQRNISVGDR (98 aa)) the chain is on the extracellular side. 3 N-linked (GlcNAc...) asparagine glycosylation sites follow: Asn-39, Asn-47, and Asn-114. A helical transmembrane segment spans residues 121–141 (LVRGFVYFVLLIYLFVGVSII). Topologically, residues 142 to 179 (ADRFMAAIEAITSIERAVVVKGPNNTKQVMHVRIWNET) are cytoplasmic. The helical transmembrane segment at 180–200 (VANLTLMALGSSAPEILLSVI) threads the bilayer. Topologically, residues 201–216 (EIYAKDFESGDLGPGT) are extracellular. Residues 217–237 (IVGSAAYNLFMIIAVCMIWIP) traverse the membrane as a helical segment. Topologically, residues 238-257 (AGEVRRIRHLRVFFVTALFS) are cytoplasmic. 2 consecutive transmembrane segments (helical) span residues 258 to 278 (VFAY…VILV) and 279 to 299 (WEAI…YIAE). At 300 to 749 (RRLLVYKYMD…NDDEEEEVPS (450 aa)) the chain is on the cytoplasmic side. Residues 301–318 (RLLVYKYMDKNYRVNKRG) form a corresponds to the exchanger inhibitory peptide (XIP) found in other sodium/calcium exchange proteins and thought to be involved in calmodulin binding region. Residues 440–551 (DPIRMYFEPG…MIATVMILDD (112 aa)) form the Calx-beta 1 domain. Positions 455, 490, 515, 516, 518, 520, 523, 550, 551, and 552 each coordinate Ca(2+). One can recognise a Calx-beta 2 domain in the interval 555-694 (GIFAFTDSVF…LTTAYVRIRE (140 aa)). The chain crosses the membrane as a helical span at residues 750 to 770 (CFSYVSHFVCLFWKVLFAFVP). The Extracellular segment spans residues 771-775 (PTDIC). A helical membrane pass occupies residues 776–796 (GGYVTFVVSIFVIGVITAIIG). The Cytoplasmic segment spans residues 797–813 (DAASYFGCALNIKDSVT). Residues 814 to 834 (AILFVALGTSIPDTFASMIAA) form a helical membrane-spanning segment. Over 835-848 (KHDEGADNCIGNVT) the chain is Extracellular. Asn-846 carries an N-linked (GlcNAc...) asparagine glycan. A helical membrane pass occupies residues 849-869 (GSNAVNVFLGIGLAWTIAAVY). The Cytoplasmic segment spans residues 870–883 (HSSHGMTFNVEPGT). A helical transmembrane segment spans residues 884-904 (IGFAVALFCGEALIAIMLIMF). Residues 905-923 (RRWHKGIGAELGGPKVSKY) lie on the Extracellular side of the membrane. The helical transmembrane segment at 924–944 (ISAAILVFLWVFYVVICILEA) threads the bilayer. Over 945-950 (YDVIRV) the chain is Cytoplasmic.

It belongs to the Ca(2+):cation antiporter (CaCA) (TC 2.A.19) family. SLC8 subfamily. Ubiquitously expressed with higher expression in head compared to body (at protein level). Enriched in photoreceptor cells of the eye (at protein level). In the adult head, expressed in retina, optic ganglia and all neuronal tissues.

It is found in the cell membrane. The protein localises to the cell projection. It localises to the rhabdomere membrane. It carries out the reaction Ca(2+)(in) + 3 Na(+)(out) = Ca(2+)(out) + 3 Na(+)(in). Activated by a Na(+) electrochemical gradient but also undergoes Na(2+)-dependent inactivation. Inhibited by micromolar levels of cytoplasmic Ca(2+), which is the opposite of most characterized mammalian homologs. With respect to regulation, exhibits greater extent of inhibition by Ca(2+) than isoform D/1.2. Its activity is regulated as follows. Exhibits greater Na(2+)-dependent inactivation than isoform A/1.1, probably due to greater stability of the inactive Na(2+)-bound form. Na(+)/Ca(2+) antiporter that couples the energy of a Na(+) electrochemical gradient to the movement of Ca(2+) against an electrochemical gradient across a membrane, which contributes to the regulation of cytoplasmic Ca(2+) levels. Mediates Na(+)/Ca(2+) exchange in photoreceptor cells and involved in controlling Ca(2+) levels during phototransduction, affecting magnitude of the photoresponse, activation kinetics, signal amplification, response termination, and light adaptation. Light induced depolarization of photoreceptor cells, resulting in Na(+) and Ca(2+) entry through trp/transient receptor potential protein channels, is essential for photoreceptor cell function but may result in toxic levels of cytoplasmic Ca(2+). Na(+)/Ca(2+) antiporter regulation of Ca(2+) levels protects photoreceptor cells from light-dependent retinal degeneration. This chain is Sodium/calcium exchanger Calx, found in Drosophila melanogaster (Fruit fly).